The sequence spans 61 residues: Small ribosomal subunit protein uS14 (61 aa).

Zn(2+) contacts are provided by Cys24, Cys27, Cys40, and Cys43.

Belongs to the universal ribosomal protein uS14 family. Zinc-binding uS14 subfamily. In terms of assembly, part of the 30S ribosomal subunit. Contacts proteins S3 and S10. Zn(2+) serves as cofactor.

Its function is as follows. Binds 16S rRNA, required for the assembly of 30S particles and may also be responsible for determining the conformation of the 16S rRNA at the A site. The sequence is that of Small ribosomal subunit protein uS14 from Thermosipho africanus (strain TCF52B).